A 152-amino-acid polypeptide reads, in one-letter code: Ribosome maturation factor RimP (152 aa).

The protein belongs to the RimP family.

The protein localises to the cytoplasm. Functionally, required for maturation of 30S ribosomal subunits. This chain is Ribosome maturation factor RimP, found in Fervidobacterium nodosum (strain ATCC 35602 / DSM 5306 / Rt17-B1).